The primary structure comprises 504 residues: Hexokinase-10 (504 aa).

Residues 7–29 traverse the membrane as a helical segment; the sequence is GWVRVAAVGWAVAACAVAAGMVA. The Hexokinase domain occupies 39–493; that stretch reads NRAVAVVRDL…SGTGAALLAA (455 aa). Residues 94–226 are hexokinase small subdomain; it reads DGSEEGISYA…GLNMKVNVLV (133 aa). Residues G108 and T109 each contribute to the ADP site. 6 residues coordinate D-glucose: T192, K193, N227, N254, E282, and E313. The tract at residues 227-482 is hexokinase large subdomain; sequence NNTVGTLALG…ATVSLRVMEE (256 aa). Position 447 (G447) interacts with ADP.

The protein belongs to the hexokinase family. As to expression, expressed specifically in stamen.

The protein localises to the plastid. It is found in the chloroplast outer membrane. It carries out the reaction a D-hexose + ATP = a D-hexose 6-phosphate + ADP + H(+). It catalyses the reaction D-fructose + ATP = D-fructose 6-phosphate + ADP + H(+). The catalysed reaction is D-glucose + ATP = D-glucose 6-phosphate + ADP + H(+). Its pathway is carbohydrate metabolism; hexose metabolism. The protein operates within carbohydrate degradation; glycolysis; D-glyceraldehyde 3-phosphate and glycerone phosphate from D-glucose: step 1/4. In terms of biological role, fructose and glucose phosphorylating enzyme. The protein is Hexokinase-10 (HXK10) of Oryza sativa subsp. japonica (Rice).